Consider the following 354-residue polypeptide: Clavesin-1 (354 aa).

Residues 118–279 (IKRALIDGFP…EFGGTLPPYD (162 aa)) enclose the CRAL-TRIO domain. The disordered stretch occupies residues 333–354 (AGTLKHEEKGENENTQPLLALD). A compositionally biased stretch (basic and acidic residues) spans 335–344 (TLKHEEKGEN). The segment covering 345–354 (ENTQPLLALD) has biased composition (polar residues).

As to quaternary structure, forms a complex with clathrin heavy chain and gamma-adaptin.

The protein localises to the golgi apparatus. It is found in the trans-Golgi network membrane. The protein resides in the early endosome membrane. It localises to the cytoplasmic vesicle. Its subcellular location is the clathrin-coated vesicle. In terms of biological role, required for normal morphology of late endosomes and/or lysosomes in neurons. Binds phosphatidylinositol 3,5-bisphosphate (PtdIns(3,5)P2). This is Clavesin-1 (CLVS1) from Pongo abelii (Sumatran orangutan).